The following is a 334-amino-acid chain: D-fructose 1,6-bisphosphatase class 2/sedoheptulose 1,7-bisphosphatase (334 aa).

Asp33, Glu57, Asp85, and Glu88 together coordinate Mn(2+). Residues 88 to 90 (EGT), Tyr119, 164 to 166 (RAR), and 186 to 188 (DGD) each bind substrate. Position 213 (Glu213) interacts with Mn(2+).

This sequence belongs to the FBPase class 2 family. As to quaternary structure, homotetramer. Mn(2+) serves as cofactor.

It catalyses the reaction beta-D-fructose 1,6-bisphosphate + H2O = beta-D-fructose 6-phosphate + phosphate. The enzyme catalyses D-sedoheptulose 1,7-bisphosphate + H2O = D-sedoheptulose 7-phosphate + phosphate. It functions in the pathway carbohydrate biosynthesis; Calvin cycle. Its function is as follows. Catalyzes the hydrolysis of fructose 1,6-bisphosphate (Fru 1,6-P2) and sedoheptulose 1,7-bisphosphate (Sed 1,7-P2) to fructose 6-phosphate and sedoheptulose 7-phosphate, respectively. This Prochlorococcus marinus (strain MIT 9303) protein is D-fructose 1,6-bisphosphatase class 2/sedoheptulose 1,7-bisphosphatase.